Reading from the N-terminus, the 481-residue chain is U6 small nuclear RNA (adenine-(43)-N(6))-methyltransferase (481 aa).

Lysine 82, glycine 108, aspartate 131, threonine 164, and asparagine 184 together coordinate S-adenosyl-L-methionine.

This sequence belongs to the methyltransferase superfamily. METTL16/RlmF family. As to quaternary structure, self-associates. Interacts with dlc-1; the interaction is direct, and is required for nuclear localization of mett-10.

It is found in the nucleus. It carries out the reaction an adenosine in mRNA + S-adenosyl-L-methionine = an N(6)-methyladenosine in mRNA + S-adenosyl-L-homocysteine + H(+). It catalyses the reaction adenosine in U6 snRNA + S-adenosyl-L-methionine = N(6)-methyladenosine in U6 snRNA + S-adenosyl-L-homocysteine + H(+). RNA N6-methyltransferase that methylates adenosine residues at the N(6) position of a subset of RNAs and is involved in S-adenosyl-L-methionine homeostasis by regulating splicing of S-adenosylmethionine synthase transcripts (sams-3, sams-4 and sams-5). Able to N6-methylate a subset of mRNAs containing the 5'UACAGAAAC-3' nonamer sequence. Plays a key role in S-adenosyl-L-methionine homeostasis: under rich-diet conditions, catalyzes N6-methylation of S-adenosylmethionine synthase mRNAs (sams-3, sams-4 and sams-5), directly inhibiting splicing and protein production of S-adenosylmethionine synthase. In addition to mRNAs, also able to mediate N6-methylation of U6 small nuclear RNA (U6 snRNA). Required for gamete production, inhibiting germ cell proliferative fate and ensuring germ cell meiotic development. Also promotes progression of the mitotic cell cycle in those germ cells that continue to proliferate. Plays a role in the development of the vulva, somatic gonad and embryo. The sequence is that of U6 small nuclear RNA (adenine-(43)-N(6))-methyltransferase from Caenorhabditis briggsae.